Reading from the N-terminus, the 352-residue chain is Thymidine kinase (352 aa).

26–33 (GSMGIGKT) lines the ATP pocket. The Proton acceptor role is filled by E54. Q95 lines the substrate pocket. ATP is bound at residue R185. R191 is a binding site for substrate.

It belongs to the herpesviridae thymidine kinase family. Homodimer.

The catalysed reaction is thymidine + ATP = dTMP + ADP + H(+). Its function is as follows. Catalyzes the transfer of the gamma-phospho group of ATP to thymidine to generate dTMP in the salvage pathway of pyrimidine synthesis. The dTMP serves as a substrate for DNA polymerase during viral DNA replication. Allows the virus to be reactivated and to grow in non-proliferative cells lacking a high concentration of phosphorylated nucleic acid precursors. The sequence is that of Thymidine kinase from Gallus gallus (Chicken).